The chain runs to 406 residues: Cysteine desulfurase (406 aa).

Lysine 226 is modified (N6-(pyridoxal phosphate)lysine). The active-site Cysteine persulfide intermediate is cysteine 364.

Belongs to the class-V pyridoxal-phosphate-dependent aminotransferase family. Csd subfamily. As to quaternary structure, homodimer. Interacts with SufE and the SufBCD complex composed of SufB, SufC and SufD. The interaction with SufE is required to mediate the direct transfer of the sulfur atom from the S-sulfanylcysteine. Requires pyridoxal 5'-phosphate as cofactor.

Its subcellular location is the cytoplasm. It carries out the reaction (sulfur carrier)-H + L-cysteine = (sulfur carrier)-SH + L-alanine. The catalysed reaction is L-selenocysteine + AH2 = hydrogenselenide + L-alanine + A + H(+). It functions in the pathway cofactor biosynthesis; iron-sulfur cluster biosynthesis. Its function is as follows. Cysteine desulfurases mobilize the sulfur from L-cysteine to yield L-alanine, an essential step in sulfur metabolism for biosynthesis of a variety of sulfur-containing biomolecules. Component of the suf operon, which is activated and required under specific conditions such as oxidative stress and iron limitation. Acts as a potent selenocysteine lyase in vitro, that mobilizes selenium from L-selenocysteine. Selenocysteine lyase activity is however unsure in vivo. This is Cysteine desulfurase from Escherichia coli O7:K1 (strain IAI39 / ExPEC).